A 702-amino-acid polypeptide reads, in one-letter code: 1,4-alpha-glucan-branching enzyme (702 aa).

The residue at position 2 (Ala-2) is an N-acetylalanine. Substrate contacts are provided by residues 62 to 63 and 91 to 93; these read NE and WAP. Position 107 (Trp-107) interacts with (1,4-alpha-D-glucosyl)n. 118 to 121 contacts substrate; that stretch reads DYGK. Position 143 (Lys-143) interacts with (1,4-alpha-D-glucosyl)n. Position 173 is a phosphotyrosine (Tyr-173). 333–336 lines the substrate pocket; that stretch reads EILR. Catalysis depends on Asp-357, which acts as the Nucleophile. Glu-412 functions as the Proton donor in the catalytic mechanism.

This sequence belongs to the glycosyl hydrolase 13 family. GlgB subfamily. As to quaternary structure, monomer.

The catalysed reaction is Transfers a segment of a (1-&gt;4)-alpha-D-glucan chain to a primary hydroxy group in a similar glucan chain.. The protein operates within glycan biosynthesis; glycogen biosynthesis. Its function is as follows. Glycogen-branching enzyme participates in the glycogen biosynthetic process along with glycogenin and glycogen synthase. Generates alpha-1,6-glucosidic branches from alpha-1,4-linked glucose chains, to increase solubility of the glycogen polymer. This chain is 1,4-alpha-glucan-branching enzyme (GBE1), found in Homo sapiens (Human).